Consider the following 316-residue polypeptide: 4-hydroxy-3-methylbut-2-enyl diphosphate reductase (316 aa).

Cys12 is a binding site for [4Fe-4S] cluster. His41 and His74 together coordinate (2E)-4-hydroxy-3-methylbut-2-enyl diphosphate. Residues His41 and His74 each contribute to the dimethylallyl diphosphate site. Residues His41 and His74 each coordinate isopentenyl diphosphate. Cys96 contributes to the [4Fe-4S] cluster binding site. His124 is a (2E)-4-hydroxy-3-methylbut-2-enyl diphosphate binding site. Dimethylallyl diphosphate is bound at residue His124. His124 contacts isopentenyl diphosphate. Catalysis depends on Glu126, which acts as the Proton donor. Position 169 (Thr169) interacts with (2E)-4-hydroxy-3-methylbut-2-enyl diphosphate. Residue Cys199 coordinates [4Fe-4S] cluster. Positions 227, 228, 229, and 271 each coordinate (2E)-4-hydroxy-3-methylbut-2-enyl diphosphate. Residues Ser227, Ser228, Asn229, and Ser271 each coordinate dimethylallyl diphosphate. Residues Ser227, Ser228, Asn229, and Ser271 each contribute to the isopentenyl diphosphate site.

The protein belongs to the IspH family. It depends on [4Fe-4S] cluster as a cofactor.

The catalysed reaction is isopentenyl diphosphate + 2 oxidized [2Fe-2S]-[ferredoxin] + H2O = (2E)-4-hydroxy-3-methylbut-2-enyl diphosphate + 2 reduced [2Fe-2S]-[ferredoxin] + 2 H(+). It catalyses the reaction dimethylallyl diphosphate + 2 oxidized [2Fe-2S]-[ferredoxin] + H2O = (2E)-4-hydroxy-3-methylbut-2-enyl diphosphate + 2 reduced [2Fe-2S]-[ferredoxin] + 2 H(+). It participates in isoprenoid biosynthesis; dimethylallyl diphosphate biosynthesis; dimethylallyl diphosphate from (2E)-4-hydroxy-3-methylbutenyl diphosphate: step 1/1. The protein operates within isoprenoid biosynthesis; isopentenyl diphosphate biosynthesis via DXP pathway; isopentenyl diphosphate from 1-deoxy-D-xylulose 5-phosphate: step 6/6. Its function is as follows. Catalyzes the conversion of 1-hydroxy-2-methyl-2-(E)-butenyl 4-diphosphate (HMBPP) into a mixture of isopentenyl diphosphate (IPP) and dimethylallyl diphosphate (DMAPP). Acts in the terminal step of the DOXP/MEP pathway for isoprenoid precursor biosynthesis. The protein is 4-hydroxy-3-methylbut-2-enyl diphosphate reductase of Xylella fastidiosa (strain M12).